The following is a 350-amino-acid chain: LIM domain-containing protein unc-95 (350 aa).

Residues 1–37 (MTISPQPSHQQFESYQWTTESRSSQQRHGTGTPSQDG) show a composition bias toward polar residues. The interval 1–65 (MTISPQPSHQ…ESRNSNKDKV (65 aa)) is disordered. Residues 45–65 (PVERHVARWRSESRNSNKDKV) show a composition bias toward basic and acidic residues. Residues 83–110 (LTALKNDVEQTTEIIRRKQEQMRMERRQ) are a coiled coil. Disordered regions lie at residues 177-198 (RRGQ…EIEY), 206-225 (PEEQ…METD), and 235-262 (MSEE…SGSP). An LIM zinc-binding domain is found at 268–334 (AVCAYCSEEI…HDCFYKLYNG (67 aa)).

Ubiquitinated. Ubiquitination by rnf-5 leads to dissociation from muscle dense bodies during molting and is required for ecdysis. In terms of tissue distribution, expressed in the body wall muscles, vulval muscles and the anal muscles. Expressed in the muscle arms of the head muscle cells that form neuromuscular junctions and in the anal depressor muscle.

The protein resides in the cytoplasm. The protein localises to the nucleus. It localises to the cell membrane. Its subcellular location is the myofibril. It is found in the sarcomere. The protein resides in the m line. The protein localises to the cell junction. It localises to the focal adhesion. Required for the assembly and integrity of muscle dense bodies, which establish the adhesion sites of the muscle cells to the extracellular matrix. Decreased localization of unc-95 to dense bodies and their subsequent dissociation plays an important role in ecdysis during molting. Involved in the organization of the muscle sarcomeric structure and thereby required for locomotion. The polypeptide is LIM domain-containing protein unc-95 (Caenorhabditis elegans).